Consider the following 277-residue polypeptide: Thymidylate synthase (277 aa).

R21 provides a ligand contact to dUMP. H51 serves as a coordination point for (6R)-5,10-methylene-5,6,7,8-tetrahydrofolate. 126–127 (RR) serves as a coordination point for dUMP. C159 functions as the Nucleophile in the catalytic mechanism. DUMP is bound by residues 179–182 (RSSD), N190, and 220–222 (HAY). D182 serves as a coordination point for (6R)-5,10-methylene-5,6,7,8-tetrahydrofolate. Position 276 (A276) interacts with (6R)-5,10-methylene-5,6,7,8-tetrahydrofolate.

It belongs to the thymidylate synthase family. Bacterial-type ThyA subfamily. Homodimer.

It localises to the cytoplasm. The catalysed reaction is dUMP + (6R)-5,10-methylene-5,6,7,8-tetrahydrofolate = 7,8-dihydrofolate + dTMP. Its pathway is pyrimidine metabolism; dTTP biosynthesis. In terms of biological role, catalyzes the reductive methylation of 2'-deoxyuridine-5'-monophosphate (dUMP) to 2'-deoxythymidine-5'-monophosphate (dTMP) while utilizing 5,10-methylenetetrahydrofolate (mTHF) as the methyl donor and reductant in the reaction, yielding dihydrofolate (DHF) as a by-product. This enzymatic reaction provides an intracellular de novo source of dTMP, an essential precursor for DNA biosynthesis. In Pseudomonas fluorescens (strain SBW25), this protein is Thymidylate synthase.